Consider the following 276-residue polypeptide: uncharacterized protein (276 aa).

Residues 20 to 137 (PVLIFIPGAN…PPINTFLPDS (118 aa)) enclose the AB hydrolase-1 domain.

This sequence belongs to the AB hydrolase superfamily.

This is an uncharacterized protein from Staphylococcus aureus (strain MRSA252).